The primary structure comprises 494 residues: ATP synthase subunit alpha, chloroplastic (494 aa).

170–177 (GDRQTGKT) contributes to the ATP binding site.

Belongs to the ATPase alpha/beta chains family. In terms of assembly, F-type ATPases have 2 components, CF(1) - the catalytic core - and CF(0) - the membrane proton channel. CF(1) has five subunits: alpha(3), beta(3), gamma(1), delta(1), epsilon(1). CF(0) has four main subunits: a, b, b' and c.

It localises to the plastid. It is found in the chloroplast thylakoid membrane. The catalysed reaction is ATP + H2O + 4 H(+)(in) = ADP + phosphate + 5 H(+)(out). Its function is as follows. Produces ATP from ADP in the presence of a proton gradient across the membrane. The alpha chain is a regulatory subunit. The sequence is that of ATP synthase subunit alpha, chloroplastic from Pinus thunbergii (Japanese black pine).